The following is a 164-amino-acid chain: MKEIKLILTDIDGVWTDGGMFYDQTGNEWKKFNTSDSAGIFWAHNKGIPVGILTGEKTEIVRRRAEKLKVDYLFQGVVDKLSAAEELCNELGINLEQVAYIGDDLNDAKLLKRVGIAGVPASAPFYIRRLSTIFLEKRGGEGVFREFVEKVLGINLEDFIAVIQ.

2 residues coordinate Mg(2+): aspartate 10 and aspartate 12. Substrate is bound by residues threonine 34, 54-56 (TGE), 64-67 (RAEK), and lysine 80. Aspartate 103 lines the Mg(2+) pocket. Asparagine 106 contacts substrate.

It belongs to the KdsC family. In terms of assembly, homotetramer. Requires Mg(2+) as cofactor.

It catalyses the reaction 3-deoxy-D-glycero-beta-D-galacto-non-2-ulopyranosonate 9-phosphate + H2O = 3-deoxy-D-glycero-beta-D-galacto-non-2-ulopyranosonate + phosphate. Its function is as follows. Involved in the biosynthesis of 2-keto-3-deoxy-D-glycero-D-galacto-nononic acid used in cell-wall polysaccharides. Catalyzes the hydrolysis of 2-keto-3-deoxy-D-glycero-D-galacto-9-phosphonononic acid (KDN-9-P) to yield 2-keto-3-deoxy-D-glycero-D-galacto-nononic acid (KDN). Also able to hydrolyze N-acetylneuraminate-9-phosphate (Neu5NAc-9-P), 2-keto-3-deoxy-D-manno-octulosonate-8-phosphate (KDO-8-P), phosphoenolpyruvate (PEP), gluconate 6-phosphate, tyrosine phosphate ester and glucose-6-P as substrate. In Bacteroides thetaiotaomicron (strain ATCC 29148 / DSM 2079 / JCM 5827 / CCUG 10774 / NCTC 10582 / VPI-5482 / E50), this protein is 2-keto-3-deoxy-D-glycero-D-galacto-9-phosphonononic acid phosphatase.